The primary structure comprises 159 residues: Ribosomal RNA large subunit methyltransferase H (159 aa).

Residues L76, G108, and 127–132 contribute to the S-adenosyl-L-methionine site; that span reads FSRMTF.

It belongs to the RNA methyltransferase RlmH family. In terms of assembly, homodimer.

It is found in the cytoplasm. It catalyses the reaction pseudouridine(1915) in 23S rRNA + S-adenosyl-L-methionine = N(3)-methylpseudouridine(1915) in 23S rRNA + S-adenosyl-L-homocysteine + H(+). Its function is as follows. Specifically methylates the pseudouridine at position 1915 (m3Psi1915) in 23S rRNA. The protein is Ribosomal RNA large subunit methyltransferase H of Clostridioides difficile (strain 630) (Peptoclostridium difficile).